The primary structure comprises 817 residues: Neurabin-2 (817 aa).

Disordered stretches follow at residues 1 to 52 and 64 to 163; these read MMKT…KYGS and MGTT…GGDK. Actin-binding stretches follow at residues 1–154 and 164–282; these read MMKT…FERS and EAVA…QHRV. Position 15 is a phosphoserine; by MAPK1 (Ser15). Ser17 is subject to Phosphoserine; by CDK5. Ser94 bears the Phosphoserine; by PKA mark. Ser100 and Ser116 each carry phosphoserine. Positions 100-371 are interaction with D(2) dopamine receptor; that stretch reads SLNENVDHSA…LERGVDNGRA (272 aa). Pro residues predominate over residues 131–141; the sequence is SAQPAPPPHPP. The segment at 169 to 255 is interaction with ADRA2A, ADRA2B and ADRA2C; it reads RLLRQERAGL…KRSRVFQPPP (87 aa). A Phosphoserine modification is found at Ser192. Thr193 bears the Phosphothreonine mark. Position 205 is a phosphoserine; by MAPK1 (Ser205). A Phosphothreonine modification is found at Thr207. Residues 216–451 form a disordered region; sequence EKADSRTGLH…DPAPSRKIHF (236 aa). The span at 290–301 shows a compositional bias: basic and acidic residues; sequence KPREVRKIKPVE. Low complexity-rich tracts occupy residues 332–341 and 399–409; these read STPATTASPA and SGLGEDSGGSA. Residues 410–425 are compositionally biased toward acidic residues; that stretch reads LEEDDEEDEEDGEPPY. Residues 417-494 are interaction with protein phosphatase 1; sequence DEEDGEPPYE…LEKRVERLEL (78 aa). The residue at position 438 (Ser438) is a Phosphoserine. Positions 447 to 451 match the PP1-binding motif motif; the sequence is RKIHF. Residues 480-525 are interaction with RGS2; it reads SAEYELEKRVERLELFPVELEKDSEGLGISIIGMGAGADMGLEKLG. The region spanning 496 to 584 is the PDZ domain; the sequence is PVELEKDSEG…RVRFMIGRER (89 aa). Positions 595 to 616 form a coiled coil; sequence IQQTLEQERWQREMMEQRYAQY. The segment at 595–816 is interaction with TGN38; sequence IQQTLEQERW…NLQTLRNSNS (222 aa). Ser658 is subject to Phosphoserine. A coiled-coil region spans residues 665–816; sequence EKLVHKFKEL…NLQTLRNSNS (152 aa).

Possibly exists as a homodimer, homotrimer or a homotetramer. Interacts with F-actin, PPP1CA, neurabin-1, TGN38 and D(2) dopamine receptor. Interacts with RGS1, RGS2, RGS4, RGS19 and ADRA1B, ADRA2A, ADRA2B, ADRA2C, CDKN2A, PPP1R2, RASGFR1 and TIAM1. Interacts (via C-terminus) with SPATA13 (via C-terminal tail). Interacts with DCLK2. Interacts with ADRA2B. Stimulation of D1 (but not D2) dopamine receptors induces Ser-94 phosphorylation. Dephosphorylation of Ser-94 is mediated mainly by PP1 and to a lesser extent by PP2A. Phosphorylation of spinophilin disrupts its association with F-actin, but does not affect its binding to PP1.

It localises to the cytoplasm. The protein localises to the cytoskeleton. Its subcellular location is the nucleus. It is found in the postsynaptic density. The protein resides in the cell junction. It localises to the adherens junction. The protein localises to the cell projection. Its subcellular location is the dendritic spine. It is found in the cell membrane. The protein resides in the lamellipodium. It localises to the filopodium. The protein localises to the ruffle membrane. Seems to act as a scaffold protein in multiple signaling pathways. Modulates excitatory synaptic transmission and dendritic spine morphology. Binds to actin filaments (F-actin) and shows cross-linking activity. Binds along the sides of the F-actin. May play an important role in linking the actin cytoskeleton to the plasma membrane at the synaptic junction. Believed to target protein phosphatase 1/PP1 to dendritic spines, which are rich in F-actin, and regulates its specificity toward ion channels and other substrates, such as AMPA-type and NMDA-type glutamate receptors. Plays a role in regulation of G-protein coupled receptor signaling, including dopamine D2 receptors and alpha-adrenergic receptors. May establish a signaling complex for dopaminergic neurotransmission through D2 receptors by linking receptors downstream signaling molecules and the actin cytoskeleton. Binds to ADRA1B and RGS2 and mediates regulation of ADRA1B signaling. May confer to Rac signaling specificity by binding to both, RacGEFs and Rac effector proteins. Probably regulates p70 S6 kinase activity by forming a complex with TIAM1. Required for hepatocyte growth factor (HGF)-induced cell migration. The chain is Neurabin-2 (Ppp1r9b) from Mus musculus (Mouse).